A 163-amino-acid chain; its full sequence is RxLR effector protein PITG_13625 (163 aa).

An N-terminal signal peptide occupies residues 1 to 23 (MKVSKAIVALAALCMALLAPAAG). The RxLR-dEER signature appears at 37-52 (RHLRQESAELATTPEE).

Belongs to the RxLR effector family.

The protein localises to the secreted. Its subcellular location is the host cell membrane. Effector that enhances P.infestans colonization of Nicotiana benthamiana leaves. The sequence is that of RxLR effector protein PITG_13625 from Phytophthora infestans (strain T30-4) (Potato late blight agent).